We begin with the raw amino-acid sequence, 190 residues long: Peptidyl-tRNA hydrolase (190 aa).

Position 14 (tyrosine 14) interacts with tRNA. Residue histidine 19 is the Proton acceptor of the active site. Residues tyrosine 64, asparagine 66, and asparagine 112 each coordinate tRNA.

The protein belongs to the PTH family. Monomer.

It is found in the cytoplasm. It carries out the reaction an N-acyl-L-alpha-aminoacyl-tRNA + H2O = an N-acyl-L-amino acid + a tRNA + H(+). Hydrolyzes ribosome-free peptidyl-tRNAs (with 1 or more amino acids incorporated), which drop off the ribosome during protein synthesis, or as a result of ribosome stalling. Functionally, catalyzes the release of premature peptidyl moieties from peptidyl-tRNA molecules trapped in stalled 50S ribosomal subunits, and thus maintains levels of free tRNAs and 50S ribosomes. The sequence is that of Peptidyl-tRNA hydrolase from Chlorobium limicola (strain DSM 245 / NBRC 103803 / 6330).